The sequence spans 242 residues: 2-C-methyl-D-erythritol 4-phosphate cytidylyltransferase (242 aa).

The protein belongs to the IspD/TarI cytidylyltransferase family. IspD subfamily.

The catalysed reaction is 2-C-methyl-D-erythritol 4-phosphate + CTP + H(+) = 4-CDP-2-C-methyl-D-erythritol + diphosphate. Its pathway is isoprenoid biosynthesis; isopentenyl diphosphate biosynthesis via DXP pathway; isopentenyl diphosphate from 1-deoxy-D-xylulose 5-phosphate: step 2/6. Its function is as follows. Catalyzes the formation of 4-diphosphocytidyl-2-C-methyl-D-erythritol from CTP and 2-C-methyl-D-erythritol 4-phosphate (MEP). This is 2-C-methyl-D-erythritol 4-phosphate cytidylyltransferase from Shewanella loihica (strain ATCC BAA-1088 / PV-4).